Consider the following 62-residue polypeptide: UPF0434 protein azo1471 (62 aa).

This sequence belongs to the UPF0434 family.

The protein is UPF0434 protein azo1471 of Azoarcus sp. (strain BH72).